The sequence spans 540 residues: Zinc transporter ZIP5 (540 aa).

The N-terminal stretch at 1–20 (MMGSPVSHLLAGFCVWVVLG) is a signal peptide. The Extracellular segment spans residues 21–212 (WVGGSVPNLG…PAPPGDLLSA (192 aa)). Residue asparagine 50 is glycosylated (N-linked (GlcNAc...) asparagine). The disordered stretch occupies residues 78–101 (HGPLTGRAASPAADNSTHRPQNPE). The span at 90-101 (ADNSTHRPQNPE) shows a compositional bias: polar residues. Asparagine 160 is a glycosylation site (N-linked (GlcNAc...) asparagine). The chain crosses the membrane as a helical span at residues 213–233 (LLQSALAVLLLSLPSPLSLLL). Topologically, residues 234–244 (LRLLGPRLLRP) are cytoplasmic. Residues 245–265 (LLGFLGALAVGTLCGDALLHL) traverse the membrane as a helical segment. At 266-287 (LPHAQEGRHAGPGGLPEKDLGP) the chain is on the extracellular side. Residues 288–308 (GLSVLGGLFLLFVLENMLGLL) traverse the membrane as a helical segment. At 309–444 (RHRGLRPRCC…LLQSGLSFRR (136 aa)) the chain is on the cytoplasmic side. The interval 324 to 377 (NLETRNLDPENGSGMALQPLQAAPEPGAQGQREKNSQHPPALAPPGHQGHSHGH) is disordered. Serine 336 carries the phosphoserine modification. Histidine 375 is modified (pros-methylhistidine). The chain crosses the membrane as a helical span at residues 445–465 (LLLLSLVSGALGLGGAVLGVG). Topologically, residues 466 to 470 (LSLGP) are extracellular. Residues 471–491 (VPLTPWVFGVTAGVFLYVALV) form a helical membrane-spanning segment. Residues 492–508 (DMLPALLRPPEPLPTPH) are Cytoplasmic-facing. The chain crosses the membrane as a helical span at residues 509-529 (VLLQGLGLLLGGGLMLAITLL). Topologically, residues 530–540 (EERLLPVTTEG) are extracellular.

It belongs to the ZIP transporter (TC 2.A.5) family. Homodimer. Methylated at His-375 by METTL9. Post-translationally, N-Glycosylated. In terms of tissue distribution, expressed in liver, kidney, pancreas, small intestine, colon, spleen, fetal liver and fetal kidney.

Its subcellular location is the basolateral cell membrane. The catalysed reaction is Zn(2+)(in) = Zn(2+)(out). In terms of biological role, uniporter that transports zinc(2+) into polarized cells of enterocytes, pancreatic acinar and endoderm cells across the basolateral membrane and participates, notably, in zinc excretion from the intestine by the uptake of zinc from the blood into the intestine. The transport mechanism is temperature- and concentration-dependent and saturable. In addition, is also a high affinity copper transporter in vitro. Also may regulate glucose-stimulated insulin secretion (GSIS) in islets primarily through the zinc-activated SIRT1-PPARGC1A axis. Could regulate the BMP/TGF-beta (bone morphogenetic protein/transforming growth factor-beta) signaling pathway and modulates extracellular matrix (ECM) proteins of the sclera. Plays a role in eye development. This is Zinc transporter ZIP5 from Homo sapiens (Human).